The primary structure comprises 388 residues: MIRETLTTELAALKKQGLQRQRRTLQTPCGVRIEVDGRSLLSFCSNDYLGLAAEPTLIDAAREAALRWGVGSGSSHLVSGHFTPHEELEHKLASFVGGERALYFSTGYMANLGVVPALVGRGDAVFADKLNHASLIDAVQLSRADHQRYPHGDLTALERQLSASKAKRKLILTDAVFSMDGDLAPLTQLLELAERYDAWLMVDDAHGFGILGPQGRGTLVQYGIVLAEHPRLLYMGTLGKAAGVSGAFIAGAEEVIEWLLQRARTYIFTTASSPMLAATLLKSLDLIAGADGDARRSQLQLLIARLQDGLQGSRWQLLPSPTAIQAIIIGENDAALRVAAALAEQGLWVPAIRPPTVPKGTARLRITLSAAHSLADVDRLLAALQAAQ.

Arg20 serves as a coordination point for substrate. Residue 107–108 coordinates pyridoxal 5'-phosphate; sequence GY. Residue His132 coordinates substrate. Positions 178, 206, and 237 each coordinate pyridoxal 5'-phosphate. Lys240 is subject to N6-(pyridoxal phosphate)lysine. Residue Thr356 participates in substrate binding.

This sequence belongs to the class-II pyridoxal-phosphate-dependent aminotransferase family. BioF subfamily. In terms of assembly, homodimer. It depends on pyridoxal 5'-phosphate as a cofactor.

The catalysed reaction is 6-carboxyhexanoyl-[ACP] + L-alanine + H(+) = (8S)-8-amino-7-oxononanoate + holo-[ACP] + CO2. The protein operates within cofactor biosynthesis; biotin biosynthesis. Its function is as follows. Catalyzes the decarboxylative condensation of pimeloyl-[acyl-carrier protein] and L-alanine to produce 8-amino-7-oxononanoate (AON), [acyl-carrier protein], and carbon dioxide. This is 8-amino-7-oxononanoate synthase from Herminiimonas arsenicoxydans.